The following is a 237-amino-acid chain: rRNA-processing protein EFG1 (237 aa).

The tract at residues 1–24 (MPKTVKNPKNNKSRSRGAPIQVAE) is disordered. Coiled coils occupy residues 53-113 (DKKI…ISQT) and 166-186 (LKIT…LMEE). The disordered stretch occupies residues 206 to 237 (NDKTQKAVLTEEIDAPEQKQDEQQEEQDDFFE). Residues 228–237 (QQEEQDDFFE) show a composition bias toward acidic residues.

Belongs to the EFG1 family.

The protein resides in the nucleus. It localises to the nucleolus. Functionally, involved in rRNA processing. In Candida albicans (strain SC5314 / ATCC MYA-2876) (Yeast), this protein is rRNA-processing protein EFG1.